We begin with the raw amino-acid sequence, 298 residues long: DegV domain-containing protein UU535 (298 aa).

The 283-residue stretch at F5 to A287 folds into the DegV domain. Hexadecanoate is bound by residues S65 and S96.

Functionally, may bind long-chain fatty acids, such as palmitate, and may play a role in lipid transport or fatty acid metabolism. In Ureaplasma parvum serovar 3 (strain ATCC 700970), this protein is DegV domain-containing protein UU535.